We begin with the raw amino-acid sequence, 238 residues long: uncharacterized protein (238 aa).

Residues 1–64 (MRLDKYLSKS…KPKKNVYLML (64 aa)) enclose the S4 RNA-binding domain. Residue aspartate 103 is the Nucleophile of the active site.

It belongs to the pseudouridine synthase RsuA family.

It carries out the reaction a uridine in RNA = a pseudouridine in RNA. This is an uncharacterized protein from Aquifex aeolicus (strain VF5).